A 313-amino-acid polypeptide reads, in one-letter code: tRNA dimethylallyltransferase (313 aa).

Residue 11 to 18 participates in ATP binding; that stretch reads GPTAAGKS. 13 to 18 is a binding site for substrate; the sequence is TAAGKS. Interaction with substrate tRNA regions lie at residues 36-39, 160-164, and 244-249; these read DSAT, QRIQR, and RCVGYR.

Belongs to the IPP transferase family. In terms of assembly, monomer. The cofactor is Mg(2+).

The enzyme catalyses adenosine(37) in tRNA + dimethylallyl diphosphate = N(6)-dimethylallyladenosine(37) in tRNA + diphosphate. Its function is as follows. Catalyzes the transfer of a dimethylallyl group onto the adenine at position 37 in tRNAs that read codons beginning with uridine, leading to the formation of N6-(dimethylallyl)adenosine (i(6)A). The sequence is that of tRNA dimethylallyltransferase from Bordetella parapertussis (strain 12822 / ATCC BAA-587 / NCTC 13253).